The following is a 572-amino-acid chain: Potassium-transporting ATPase potassium-binding subunit (572 aa).

The next 10 membrane-spanning stretches (helical) occupy residues 6 to 26 (ILFV…GTYI), 66 to 86 (FFSL…VLLL), 135 to 155 (ALAV…IVLI), 177 to 197 (IFWI…FQGV), 251 to 271 (TIIT…ALTY), 283 to 303 (GWMI…VMTI), 382 to 402 (IFGG…LAVF), 428 to 448 (MFAL…AAVI), 493 to 513 (ITIA…VMML), and 537 to 557 (FIFS…TIFP).

This sequence belongs to the KdpA family. In terms of assembly, the system is composed of three essential subunits: KdpA, KdpB and KdpC.

Its subcellular location is the cell inner membrane. Its function is as follows. Part of the high-affinity ATP-driven potassium transport (or Kdp) system, which catalyzes the hydrolysis of ATP coupled with the electrogenic transport of potassium into the cytoplasm. This subunit binds the periplasmic potassium ions and delivers the ions to the membrane domain of KdpB through an intramembrane tunnel. In Francisella philomiragia subsp. philomiragia (strain ATCC 25017 / CCUG 19701 / FSC 153 / O#319-036), this protein is Potassium-transporting ATPase potassium-binding subunit.